The sequence spans 360 residues: Peptide chain release factor 1 (360 aa).

Position 235 is an N5-methylglutamine (glutamine 235). The segment at 284–304 (KVDSERSADRKSQVGSGDRSE) is disordered.

It belongs to the prokaryotic/mitochondrial release factor family. In terms of processing, methylated by PrmC. Methylation increases the termination efficiency of RF1.

It is found in the cytoplasm. Peptide chain release factor 1 directs the termination of translation in response to the peptide chain termination codons UAG and UAA. In Agrobacterium fabrum (strain C58 / ATCC 33970) (Agrobacterium tumefaciens (strain C58)), this protein is Peptide chain release factor 1.